The following is a 10624-amino-acid chain: Extracellular matrix-binding protein ebh (10624 aa).

A signal peptide spans 1–39 (MNYRDKIQKFSIRKYTVGTFSTVIATLVFLGFNTSQAHA). The span at 41 to 59 (ETNQPASVVKQKQQSNNEQ) shows a compositional bias: polar residues. Disordered stretches follow at residues 41 to 152 (ETNQ…GNDN), 250 to 277 (PQRQ…PRSV), 1347 to 1372 (NEKA…NATT), and 2418 to 2438 (TITP…TLTA). The span at 65–78 (SQVQNSQNSQNSQS) shows a compositional bias: low complexity. Polar residues predominate over residues 79 to 117 (LSATHENEQPNNSQANLVNQKVAQSSTTNDEQPASQNVN). Residues 130–140 (PDKEESKHKQN) show a composition bias toward basic and acidic residues. Composition is skewed to polar residues over residues 141-151 (ESQSANKNGND), 250-266 (PQRQ…QTRS), 1360-1372 (YRTT…NATT), and 2427-2438 (HSVSSNPSTLTA). 57 FIVAR domains span residues 2524–2580 (AKNH…VSDA), 2610–2666 (SKNN…ISDE), 2687–2750 (DTHA…VQSA), 2780–2836 (AKTK…IAAE), 2864–2919 (AKTQ…IRQN), 2947–3002 (AKNQ…INTN), 3030–3085 (AKTQ…INDK), 3154–3212 (AMTK…VNQK), 3280–3339 (AMTG…VNNA), 3407–3465 (AMGN…VNRA), 3533–3591 (AMGN…VTEA), 3659–3717 (AMNT…ITQK), 3785–3843 (AMAN…VEAA), 3911–3969 (AMGN…VEQA), 4037–4095 (AMGQ…VTAA), 4163–4221 (AMKG…ITQA), 4289–4347 (QMGN…VEAA), 4415–4473 (AMAN…VENA), 4541–4599 (AMGT…INQI), 4667–4725 (AMGQ…VDRA), 4793–4851 (AMNS…VDNA), 4919–4977 (AMGA…INDM), 5045–5103 (AMTA…VNSA), 5171–5229 (AMKG…ITQA), 5297–5355 (AMHS…VEQA), 5423–5481 (AMGQ…VERA), 5549–5607 (AMTA…VTNA), 5675–5733 (AMKG…INQA), 5801–5859 (AMTN…VETA), 6053–6111 (AMNQ…INQK), 6179–6236 (AMGN…VQAA), 6304–6362 (AMGQ…VEAA), 6430–6488 (AMQR…VEQA), 6556–6614 (AMDQ…VTAA), 6682–6740 (AMNQ…VTQA), 6808–6866 (AMER…VEAA), 6934–6992 (AMGN…VEAA), 7060–7118 (AMDK…INQA), 7186–7244 (AMGN…VEQA), 7312–7370 (AMTQ…ITAA), 7438–7496 (AMTQ…IQQA), 7564–7622 (AMTN…VEQA), 7690–7748 (AMTQ…VAQA), 7816–7874 (AMGT…VTKA), 7942–8000 (AMGN…ITRA), 8068–8129 (AMDQ…ITNE), 8194–8252 (AMEL…VNGA), 8320–8378 (AMGN…VEQA), 8446–8503 (AMHG…INQV), 8571–8629 (LMDA…VSSA), 8697–8755 (AMKA…IDQA), 8823–8881 (AMEA…VEQL), 8949–9007 (AMQA…VEQL), 9075–9133 (AMET…VEQA), 9201–9255 (SMDQ…VDQA), 9323–9382 (AMDQ…VIKL), and 9577–9633 (AMET…INGA). Residues 10430 to 10450 (IKNAIGVVGISGLLASFWFFI) form a helical membrane-spanning segment. The disordered stretch occupies residues 10527–10624 (RRKEDEEDVE…KKKKSKKNKK (98 aa)). Basic and acidic residues-rich tracts occupy residues 10542 to 10552 (TDEKVLKDNEH) and 10591 to 10601 (QKDNQSKDKKS). Residues 10606 to 10624 (TSKKVAAKKKKKKSKKNKK) show a composition bias toward basic residues.

It is found in the cell membrane. In Staphylococcus aureus (strain JH1), this protein is Extracellular matrix-binding protein ebh (ebh).